We begin with the raw amino-acid sequence, 263 residues long: Shikimate dehydrogenase (NADP(+)) (263 aa).

Shikimate contacts are provided by residues 14 to 16 (SLS) and T60. K64 (proton acceptor) is an active-site residue. Shikimate contacts are provided by N85 and D100. NADP(+) contacts are provided by residues 123–127 (GAGGA), 146–151 (NRTPQR), and L205. Shikimate is bound at residue Y207. G228 is an NADP(+) binding site. Q235 contributes to the shikimate binding site.

Belongs to the shikimate dehydrogenase family. As to quaternary structure, homodimer.

It carries out the reaction shikimate + NADP(+) = 3-dehydroshikimate + NADPH + H(+). Its pathway is metabolic intermediate biosynthesis; chorismate biosynthesis; chorismate from D-erythrose 4-phosphate and phosphoenolpyruvate: step 4/7. In terms of biological role, involved in the biosynthesis of the chorismate, which leads to the biosynthesis of aromatic amino acids. Catalyzes the reversible NADPH linked reduction of 3-dehydroshikimate (DHSA) to yield shikimate (SA). This is Shikimate dehydrogenase (NADP(+)) from Thermus thermophilus (strain ATCC 27634 / DSM 579 / HB8).